The primary structure comprises 573 residues: Potassium-transporting ATPase potassium-binding subunit (573 aa).

10 consecutive transmembrane segments (helical) span residues 6-26, 66-86, 135-155, 177-197, 257-277, 283-303, 382-402, 428-448, 493-513, and 537-557; these read ILFA…GSYI, FFSL…ILLL, ALAV…IALI, VFWI…FQGV, IQMV…GKWV, GWLI…VMTI, IFGG…LAVF, MFAL…AAVI, ITIA…VIML, and FIFA…TIFP.

This sequence belongs to the KdpA family. In terms of assembly, the system is composed of three essential subunits: KdpA, KdpB and KdpC.

The protein localises to the cell inner membrane. In terms of biological role, part of the high-affinity ATP-driven potassium transport (or Kdp) system, which catalyzes the hydrolysis of ATP coupled with the electrogenic transport of potassium into the cytoplasm. This subunit binds the periplasmic potassium ions and delivers the ions to the membrane domain of KdpB through an intramembrane tunnel. The chain is Potassium-transporting ATPase potassium-binding subunit from Francisella tularensis subsp. mediasiatica (strain FSC147).